Reading from the N-terminus, the 306-residue chain is Putative HPr kinase/phosphorylase 2 (306 aa).

Residues histidine 138 and lysine 159 contribute to the active site. 153 to 160 (GESGVGKS) contributes to the ATP binding site. Serine 160 lines the Mg(2+) pocket. Catalysis depends on aspartate 177, which acts as the Proton acceptor; for phosphorylation activity. Proton donor; for dephosphorylation activity. The interval 201–210 (LALRSVGLLN) is important for the catalytic mechanism of both phosphorylation and dephosphorylation. The important for the catalytic mechanism of dephosphorylation stretch occupies residues 264–269 (QLQPGR).

The protein belongs to the HPrK/P family. As to quaternary structure, homohexamer. Requires Mg(2+) as cofactor.

It catalyses the reaction [HPr protein]-L-serine + ATP = [HPr protein]-O-phospho-L-serine + ADP + H(+). It carries out the reaction [HPr protein]-O-phospho-L-serine + phosphate + H(+) = [HPr protein]-L-serine + diphosphate. Functionally, catalyzes the ATP- as well as the pyrophosphate-dependent phosphorylation of a specific serine residue in HPr, a phosphocarrier protein of the phosphoenolpyruvate-dependent sugar phosphotransferase system (PTS). HprK/P also catalyzes the pyrophosphate-producing, inorganic phosphate-dependent dephosphorylation (phosphorolysis) of seryl-phosphorylated HPr (P-Ser-HPr). The two antagonistic activities of HprK/P are regulated by several intracellular metabolites, which change their concentration in response to the absence or presence of rapidly metabolisable carbon sources (glucose, fructose, etc.) in the growth medium. Also phosphorylates/dephosphorylates the HPr-like catabolite repression protein crh on a specific serine residue. Therefore, by controlling the phosphorylation state of HPr and crh, HPrK/P is a sensor enzyme that plays a major role in the regulation of carbon metabolism and sugar transport: it mediates carbon catabolite repression (CCR), and regulates PTS-catalyzed carbohydrate uptake and inducer exclusion. This chain is Putative HPr kinase/phosphorylase 2 (hprK2), found in Oceanobacillus iheyensis (strain DSM 14371 / CIP 107618 / JCM 11309 / KCTC 3954 / HTE831).